A 209-amino-acid polypeptide reads, in one-letter code: Uracil phosphoribosyltransferase (209 aa).

Residues arginine 79, arginine 104, and 131–139 (DPMLATGGT) each bind 5-phospho-alpha-D-ribose 1-diphosphate. Uracil-binding positions include isoleucine 194 and 199 to 201 (GDA). A 5-phospho-alpha-D-ribose 1-diphosphate-binding site is contributed by aspartate 200.

The protein belongs to the UPRTase family. Mg(2+) is required as a cofactor.

It catalyses the reaction UMP + diphosphate = 5-phospho-alpha-D-ribose 1-diphosphate + uracil. The protein operates within pyrimidine metabolism; UMP biosynthesis via salvage pathway; UMP from uracil: step 1/1. Allosterically activated by GTP. Its function is as follows. Catalyzes the conversion of uracil and 5-phospho-alpha-D-ribose 1-diphosphate (PRPP) to UMP and diphosphate. The protein is Uracil phosphoribosyltransferase of Pseudoalteromonas translucida (strain TAC 125).